The sequence spans 308 residues: Follistatin-related protein 1 (308 aa).

The first 20 residues, 1–20, serve as a signal peptide directing secretion; it reads MWKRWLALALALVAVAWVRA. The 24-residue stretch at 30-53 folds into the Follistatin-like domain; it reads ICANVFCGAGRECAVTEKGEPTCL. Disulfide bonds link Cys-31/Cys-42, Cys-36/Cys-52, Cys-54/Cys-84, Cys-58/Cys-77, and Cys-66/Cys-98. In terms of domain architecture, Kazal-like spans 48-100; that stretch reads GEPTCLCIEQCKPHKRPVCGSNGKTYLNHCELHRDACLTGSKIQVDYDGHCKE. Residue Asn-144 is glycosylated (N-linked (GlcNAc...) asparagine). One can recognise an EF-hand 1 domain in the interval 144–178; it reads NYSEILDKYFKNFDNGDSRLDSSEFLKFVEQNETA. Ser-165 carries the post-translational modification Phosphoserine. N-linked (GlcNAc...) asparagine glycosylation is found at Asn-175 and Asn-180. An EF-hand 2 domain is found at 193 to 228; that stretch reads LRGLCVDALIELSDENADWKLSFQEFLKCLNPSFNP. A VWFC domain is found at 233–287; sequence CALEDETYADGAETEVDCNRCVCACGNWVCTAMTCDGKNQKGAQTQTEEEMTRYV.

In terms of assembly, homodimer. Interacts with SCN10A. Interacts with DIP2A; DIP2A may act as a cell surface receptor for FSTL1. Interacts with BMP4. Interacts with CD14; this interaction promotes TL4-mediated signaling cascade.

It localises to the secreted. Its function is as follows. Secreted glycoprotein that is involved in various physiological processes, such as angiogenesis, regulation of the immune response, cell proliferation and differentiation. Plays a role in the development of the central nervous system, skeletal system, lungs, and ureter. Promotes endothelial cell survival, migration and differentiation into network structures in an AKT-dependent manner. Also promotes survival of cardiac myocytes. Initiates various signaling cascades by activating different receptors on the cell surface such as DIP2A, TLR4 or BMP receptors. The sequence is that of Follistatin-related protein 1 (FSTL1) from Macaca fascicularis (Crab-eating macaque).